Consider the following 488-residue polypeptide: Integrin beta-like protein 1 (488 aa).

A signal peptide spans 1 to 21 (MHAGAFINFVWALSLVSLLAA). 40 disulfides stabilise this stretch: cysteine 38/cysteine 65, cysteine 49/cysteine 63, cysteine 57/cysteine 68, cysteine 70/cysteine 83, cysteine 85/cysteine 106, cysteine 90/cysteine 104, cysteine 98/cysteine 109, cysteine 111/cysteine 120, cysteine 126/cysteine 153, cysteine 137/cysteine 151, cysteine 145/cysteine 156, cysteine 158/cysteine 172, cysteine 174/cysteine 196, cysteine 179/cysteine 194, cysteine 188/cysteine 199, cysteine 201/cysteine 210, cysteine 214/cysteine 241, cysteine 225/cysteine 239, cysteine 233/cysteine 244, cysteine 246/cysteine 263, cysteine 265/cysteine 290, cysteine 270/cysteine 288, cysteine 282/cysteine 293, cysteine 295/cysteine 304, cysteine 310/cysteine 337, cysteine 321/cysteine 335, cysteine 329/cysteine 340, cysteine 342/cysteine 355, cysteine 357/cysteine 378, cysteine 362/cysteine 376, cysteine 370/cysteine 381, cysteine 383/cysteine 392, cysteine 398/cysteine 425, cysteine 409/cysteine 423, cysteine 417/cysteine 428, cysteine 430/cysteine 442, cysteine 444/cysteine 465, cysteine 449/cysteine 463, cysteine 457/cysteine 468, and cysteine 470/cysteine 479. I-EGF domains lie at 38 to 84 (CRLP…PLCE), 85 to 121 (CHDW…EACQ), 126 to 173 (CDLT…KYCE), 174 to 211 (CDDT…DKCE), 214 to 264 (CDIT…DTCE), 265 to 305 (CDER…RKCE), 310 to 356 (CALS…KNCE), 357 to 393 (CDDR…KLCQ), 398 to 443 (CNMT…EFCE), and 444 to 480 (CDDR…NACE). One copy of the I repeat lies at 49–89 (CRTPDGSICSGRGSCDCGICLCEVKEAGKYYGPLCECHDWV). The segment at 49–488 (CRTPDGSICS…CEIWLGSEYP (440 aa)) is cysteine-rich tandem repeats. The stretch at 90 to 136 (CHTYDGQVCAGHGQCDCGVCKCDVGWSGEACQYPTTCDLTRKKSNEM) is one II repeat. One copy of the III repeat lies at 137–178 (CKNSQAVICSNAGTCQCGRCKCENSDNSGLIYGKYCECDDTE). The stretch at 179–224 (CFDDETQEICGGHGKCYCGNCYCEAGWHGDKCEFQCDITPWEIKKR) is one IV repeat. A V repeat occupies 225–269 (CTSPDGKICSNRGTCVCGECTCHDVDPTGDWGDIHGDTCECDERN). Residues 270–320 (CKSVYDRYSDDFCSGHGQCNCGRCDCKDGWTGRKCEHPRACALSIEESKKK) form a VI repeat. Residues 321–361 (CQGSASQPCSGRGKCECGQCTCFPPGDSKVYGKNCECDDRQ) form a VII repeat. The stretch at 362-408 (CEDLEGKICGEHGTCSCGRCICEAGWFGKLCQHERKCNMTEEESKSQ) is one VIII repeat. Residue asparagine 399 is glycosylated (N-linked (GlcNAc...) asparagine). The stretch at 409–448 (CESDDGILCSGKGSCHCGKCICSPQEWYVSGEFCECDDRD) is one IX repeat. One copy of the X repeat lies at 449 to 488 (CDKHDGLICTGNGICNCGNCECWEGWNGNACEIWLGSEYP).

It localises to the secreted. The protein is Integrin beta-like protein 1 (itgbl1) of Xenopus laevis (African clawed frog).